The chain runs to 376 residues: 23S rRNA (uracil(747)-C(5))-methyltransferase RlmC (376 aa).

Residues cysteine 3, cysteine 11, cysteine 14, and cysteine 87 each coordinate [4Fe-4S] cluster. 4 residues coordinate S-adenosyl-L-methionine: glutamine 212, phenylalanine 241, glutamate 262, and asparagine 307. Cysteine 334 (nucleophile) is an active-site residue.

This sequence belongs to the class I-like SAM-binding methyltransferase superfamily. RNA M5U methyltransferase family. RlmC subfamily.

It catalyses the reaction uridine(747) in 23S rRNA + S-adenosyl-L-methionine = 5-methyluridine(747) in 23S rRNA + S-adenosyl-L-homocysteine + H(+). Its function is as follows. Catalyzes the formation of 5-methyl-uridine at position 747 (m5U747) in 23S rRNA. This chain is 23S rRNA (uracil(747)-C(5))-methyltransferase RlmC, found in Pectobacterium carotovorum subsp. carotovorum (strain PC1).